A 133-amino-acid polypeptide reads, in one-letter code: Small ribosomal subunit protein eS8 (133 aa).

The tract at residues 1-34 (MGVWHGRSLRKPTGGRIRPHRKKRKFEMGNPPTE) is disordered.

This sequence belongs to the eukaryotic ribosomal protein eS8 family. In terms of assembly, part of the 30S ribosomal subunit.

The polypeptide is Small ribosomal subunit protein eS8 (Methanopyrus kandleri (strain AV19 / DSM 6324 / JCM 9639 / NBRC 100938)).